We begin with the raw amino-acid sequence, 352 residues long: tRNA-specific 2-thiouridylase MnmA (352 aa).

Residues 9 to 16 (ALSGGVDS) and methionine 35 each bind ATP. Cysteine 96 serves as the catalytic Nucleophile. A disulfide bond links cysteine 96 and cysteine 192. Glycine 120 serves as a coordination point for ATP. The interaction with tRNA stretch occupies residues 142–144 (KDQ). The active-site Cysteine persulfide intermediate is cysteine 192. The interval 299–300 (RY) is interaction with tRNA.

This sequence belongs to the MnmA/TRMU family.

Its subcellular location is the cytoplasm. The enzyme catalyses S-sulfanyl-L-cysteinyl-[protein] + uridine(34) in tRNA + AH2 + ATP = 2-thiouridine(34) in tRNA + L-cysteinyl-[protein] + A + AMP + diphosphate + H(+). Functionally, catalyzes the 2-thiolation of uridine at the wobble position (U34) of tRNA, leading to the formation of s(2)U34. In Acidithiobacillus ferrooxidans (strain ATCC 23270 / DSM 14882 / CIP 104768 / NCIMB 8455) (Ferrobacillus ferrooxidans (strain ATCC 23270)), this protein is tRNA-specific 2-thiouridylase MnmA.